The chain runs to 188 residues: MSSETPNHRDSVYERLLRERIIFLGSQVDDEIANELCAQILLLSAEDPTRDISLYINSPGGSVTAGMAIYDTMKYAPCDIATYGMGLAASMGQFLLSAGTKGKRYALPHARIMMHQPSAGVGGTAADIAIQAEQFAYTKREMAELIAEFTGQTVEQITKDSDRDRWFTAQQAKEYGFVDHVITSAKES.

Serine 90 (nucleophile) is an active-site residue. Histidine 115 is a catalytic residue.

This sequence belongs to the peptidase S14 family. In terms of assembly, fourteen ClpP subunits assemble into 2 heptameric rings which stack back to back to give a disk-like structure with a central cavity, resembling the structure of eukaryotic proteasomes.

The protein resides in the cytoplasm. It carries out the reaction Hydrolysis of proteins to small peptides in the presence of ATP and magnesium. alpha-casein is the usual test substrate. In the absence of ATP, only oligopeptides shorter than five residues are hydrolyzed (such as succinyl-Leu-Tyr-|-NHMec, and Leu-Tyr-Leu-|-Tyr-Trp, in which cleavage of the -Tyr-|-Leu- and -Tyr-|-Trp bonds also occurs).. In terms of biological role, cleaves peptides in various proteins in a process that requires ATP hydrolysis. Has a chymotrypsin-like activity. Plays a major role in the degradation of misfolded proteins. The sequence is that of ATP-dependent Clp protease proteolytic subunit 1 from Corynebacterium jeikeium (strain K411).